The primary structure comprises 304 residues: Fructose permease IIC component (304 aa).

The region spanning 1-304 (IHSADPKDPT…GIIKKPVEEK (304 aa)) is the PTS EIIC type-2 domain. 8 helical membrane-spanning segments follow: residues 20–40 (FIGS…FIAM), 62–82 (NAGF…VILL), 98–118 (PVLI…QFVI), 140–160 (NLVL…GGPL), 181–201 (AAIM…TTFF), 214–234 (ITCY…FAAA), 238–258 (VIPA…FFRV), and 277–297 (LLYL…LGII).

It is found in the cell membrane. Its function is as follows. The phosphoenolpyruvate-dependent sugar phosphotransferase system (PTS), a major carbohydrate active -transport system, catalyzes the phosphorylation of incoming sugar substrates concomitant with their translocation across the cell membrane. This system is involved in fructose transport. The polypeptide is Fructose permease IIC component (fruA) (Bacillus amyloliquefaciens (Bacillus velezensis)).